The sequence spans 285 residues: Bifunctional protein FolD (285 aa).

NADP(+) is bound by residues G165–S167 and S190.

Belongs to the tetrahydrofolate dehydrogenase/cyclohydrolase family. Homodimer.

It catalyses the reaction (6R)-5,10-methylene-5,6,7,8-tetrahydrofolate + NADP(+) = (6R)-5,10-methenyltetrahydrofolate + NADPH. It carries out the reaction (6R)-5,10-methenyltetrahydrofolate + H2O = (6R)-10-formyltetrahydrofolate + H(+). It participates in one-carbon metabolism; tetrahydrofolate interconversion. Catalyzes the oxidation of 5,10-methylenetetrahydrofolate to 5,10-methenyltetrahydrofolate and then the hydrolysis of 5,10-methenyltetrahydrofolate to 10-formyltetrahydrofolate. The chain is Bifunctional protein FolD from Staphylococcus saprophyticus subsp. saprophyticus (strain ATCC 15305 / DSM 20229 / NCIMB 8711 / NCTC 7292 / S-41).